We begin with the raw amino-acid sequence, 328 residues long: Cytochrome c biogenesis protein CcsA (328 aa).

Transmembrane regions (helical) follow at residues 13–33, 46–66, 73–93, 101–121, 146–166, 234–254, 263–283, and 295–315; these read ISFSVVSIVLTIYFFTLLVNL, GIVITFFGITGLLFTRWIYSG, LYESLIFLSWAFSIIHMVSYF, LNAITAPSAIFIQGFATSGLL, MILGYGALLCGSLLSIALLVI, IISLGFIFLTVGILSGAVWAN, WDPKETWAFITWTIFAIYLHI, and AIVASIGFLLIWICYFGVNLL.

It belongs to the CcmF/CycK/Ccl1/NrfE/CcsA family. In terms of assembly, may interact with Ccs1.

It is found in the plastid. Its subcellular location is the chloroplast thylakoid membrane. Required during biogenesis of c-type cytochromes (cytochrome c6 and cytochrome f) at the step of heme attachment. The polypeptide is Cytochrome c biogenesis protein CcsA (Barbarea verna (Land cress)).